The sequence spans 109 residues: UPF0122 protein CLL_A1244 (109 aa).

This sequence belongs to the UPF0122 family.

Functionally, might take part in the signal recognition particle (SRP) pathway. This is inferred from the conservation of its genetic proximity to ftsY/ffh. May be a regulatory protein. The sequence is that of UPF0122 protein CLL_A1244 from Clostridium botulinum (strain Eklund 17B / Type B).